The primary structure comprises 752 residues: Pre-mRNA-processing factor 39 (752 aa).

The tract at residues 1 to 148 is disordered; that stretch reads MEDSGESMTG…DPAAPQEPEL (148 aa). Residues 28–42 are compositionally biased toward polar residues; the sequence is TTGTDDVTGLSTSDL. Low complexity-rich tracts occupy residues 43–56, 76–94, and 133–148; these read TTEQPPESQEQTQP, QSASPAEPAAENSEQPPES, and EPAAEADPAAPQEPEL. HAT repeat units follow at residues 180 to 212, 214 to 246, and 254 to 289; these read NHLLGSRKAFDAFFLHYPYCYGYWKKYADIERK, GYIQMADEVYRRGLQAIPLSVDLWLHYITFLRE, and EAESRIRASYEHAVLACGTDFRSDRLWEAYIAWETE. The segment at 347–374 is disordered; the sequence is NKPSGDEDAETEAPGEELPPGTEDLPDP. Over residues 352–361 the composition is skewed to acidic residues; sequence DEDAETEAPG. 2 HAT repeats span residues 408–440 and 442–474; these read AFEEGIKRPYFHVKALEKTQLNNWREYLDFELE and GTPERVVVLFERCLIACALYEEFWIKYAKYLES. Residues 678–699 are compositionally biased toward basic and acidic residues; that stretch reads SFKRKAENGSEEPDAKRQRTDD. Positions 678–703 are disordered; sequence SFKRKAENGSEEPDAKRQRTDDQSVA. An HAT 6 repeat occupies 700–731; the sequence is QSVASGQMMDMQANHAGYNYNNWYQYNSWGSQ.

Belongs to the PRP39 family.

Its subcellular location is the nucleus. In terms of biological role, involved in pre-mRNA splicing. The polypeptide is Pre-mRNA-processing factor 39 (prpf39) (Danio rerio (Zebrafish)).